Consider the following 648-residue polypeptide: MEHIQGAWKTISNGFGLKDAVFDGSSCISPTIVQQFGYQRRASDDGKLTDSSKTSNTIRVFLPNKQRTVVNVRNGMSLHDCLMKALKVRGLQPECCAVFRLLQEHKGKKARLDWNTDAASLIGEELQVDFLDHVPLTTHNFARKTFLKLAFCDICQKFLLNGFRCQTCGYKFHEHCSTKVPTMCVDWSNIRQLLLFPNSTASDSGVPAPPSFTMRRMRESVSRMPASSQHRYSTPHAFTFNTSSPSSEGSLSQRQRSTSTPNVHMVSTTLPVDSRMIEDAIRSHSESASPSALSSSPNNLSPTGWSQPKTPVPAQRERAPGSGTQEKNKIRPRGQRDSSYYWEIEASEVMLSTRIGSGSFGTVYKGKWHGDVAVKILKVVDPTPEQLQAFRNEVAVLRKTRHVNILLFMGYMTKDNLAIVTQWCEGSSLYKHLHVQETKFQMFQLIDIARQTAQGMDYLHAKNIIHRDMKSNNIFLHEGLTVKIGDFGLATVKSRWSGSQQVEQPTGSVLWMAPEVIRMQDNNPFSFQSDVYSYGIVLYELMTGELPYSHINNRDQIIFMVGRGYASPDLSRLYKNCPKAMKRLVADCVKKVKEERPLFPQILSSIELLQHSLPKINRSASEPSLHRAAHTEDINACTLTTSPRLPVF.

The residue at position 29 (Ser29) is a Phosphoserine; by MAPK1. Ser43 is modified (phosphoserine). An RBD domain is found at 56–131; it reads NTIRVFLPNK…IGEELQVDFL (76 aa). A Phorbol-ester/DAG-type zinc finger spans residues 138 to 184; it reads THNFARKTFLKLAFCDICQKFLLNGFRCQTCGYKFHEHCSTKVPTMC. 8 residues coordinate Zn(2+): His139, Cys152, Cys155, Cys165, Cys168, His173, Cys176, and Cys184. The tract at residues 217 to 335 is disordered; that stretch reads MRESVSRMPA…EKNKIRPRGQ (119 aa). Phosphoserine; by PKA is present on Ser233. Residues 239–271 are compositionally biased toward polar residues; sequence TFNTSSPSSEGSLSQRQRSTSTPNVHMVSTTLP. Residues Ser252 and Ser259 each carry the phosphoserine modification. Position 268 is a phosphothreonine; by autocatalysis (Thr268). A Phosphothreonine; by PKA modification is found at Thr269. Residues 275–285 show a composition bias toward basic and acidic residues; it reads RMIEDAIRSHS. Over residues 286–301 the composition is skewed to low complexity; it reads ESASPSALSSSPNNLS. Phosphoserine; by MAPK1 occurs at positions 289, 296, and 301. The interaction with PEBP1/RKIP stretch occupies residues 331–349; that stretch reads RPRGQRDSSYYWEIEASEV. Ser338 is subject to Phosphoserine; by PAK1, PAK2, PAK3 and PAK5. At Ser339 the chain carries Phosphoserine; by PAK1, PAK2 and PAK3. Tyr340 and Tyr341 each carry phosphotyrosine; by SRC. Positions 349–609 constitute a Protein kinase domain; sequence VMLSTRIGSG…PQILSSIELL (261 aa). Residues 355–363 and Lys375 each bind ATP; that span reads IGSGSFGTV. Residue Asp468 is the Proton acceptor of the active site. At Ser471 the chain carries Phosphoserine. A Phosphothreonine modification is found at Thr491. Ser494 is modified (phosphoserine). A phosphoserine; by PKC mark is found at Ser497 and Ser499. Arg563 is subject to Symmetric dimethylarginine; by PRMT5. Ser621 bears the Phosphoserine mark. Ser642 is subject to Phosphoserine; by MAPK1.

The protein belongs to the protein kinase superfamily. TKL Ser/Thr protein kinase family. RAF subfamily. Monomer. Homodimer. Heterodimerizes with BRAF and this heterodimer possesses a highly increased kinase activity compared to the respective homodimers or monomers. Heterodimerization is mitogen-regulated and enhanced by 14-3-3 proteins. MAPK1/ERK2 activation can induce a negative feedback that promotes the dissociation of the heterodimer. Forms a multiprotein complex with Ras (M-Ras/MRAS), SHOC2 and protein phosphatase 1 (PPP1CA, PPP1CB and PPP1CC). Interacts with LZTR1. Interacts with Ras proteins; the interaction is antagonized by RIN1. Weakly interacts with RIT1. Interacts with STK3/MST2; the interaction inhibits its pro-apoptotic activity. Interacts (when phosphorylated at Ser-259) with YWHAZ (unphosphorylated at 'Thr-232'). Interacts with MAP3K5/ASF1 (via N-terminus) and this interaction inhibits the proapoptotic function of MAP3K5/ASK1. Interacts with PAK1 (via kinase domain). The phosphorylated form interacts with PIN1. The Ser-338 and Ser-339 phosphorylated form (by PAK1) interacts with BCL2. Interacts with PEBP1/RKIP and this interaction is enhanced if RAF1 is phosphorylated on residues Ser-338, Ser-339, Tyr-340 and Tyr-341. Interacts with ADCY2, ADCY5, ADCY6, DGKH, RCAN1/DSCR1, PPP1R12A, PKB/AKT1, PPP2CA, PPP2R1B, SPRY2, SPRY4, CNKSR1/CNK1, KSR2 and PHB/prohibitin. Interacts with ROCK2. Interacts (via N-terminus) with RGS14 (via RBD domains); the interaction mediates the formation of a ternary complex with BRAF, a ternary complex inhibited by GNAI1. Probably forms a complex composed of chaperones HSP90 and HSP70, co-chaperones CDC37, PPP5C, TSC1 and client protein TSC2, CDK4, AKT, RAF1 and NR3C1; this complex does not contain co-chaperones STIP1/HOP and PTGES3/p23. Interacts with MAP2K1/MEK1 and MAP2K2/MEK2. In its active form, interacts with PRMT5. Interacts with FAM83B; displaces 14-3-3 proteins from RAF1 and activates RAF1. Interacts with PDE8A; the interaction promotes RAF1 activity. Interacts with MFHAS1. Interacts with GLS. Interacts with YWHAZ. Interacts with NEK10 and MAP2K1; the interaction is direct with NEK10 and required for ERK1/2-signaling pathway activation in response to UV irradiation. It depends on Zn(2+) as a cofactor. In terms of processing, phosphorylation at Thr-269, Ser-338, Tyr-341, Thr-491 and Ser-494 results in its activation. Phosphorylation at Ser-29, Ser-43, Ser-289, Ser-296, Ser-301 and Ser-642 by MAPK1/ERK2 results in its inactivation. Phosphorylation at Ser-259 induces the interaction with YWHAZ and inactivates kinase activity. Dephosphorylation of Ser-259 by the SHOC2-MRAS-PP1c (SMP) complex consisting of SHOC2, GTP-bound M-Ras/MRAS and the catalytic subunit of protein phosphatase 1 (PPP1CA, PPP1CB or PPP1CC); this relieves inactivation and stimulates kinase activity. Phosphorylation at Ser-338 by PAK1 and PAK5 and Ser-339 by PAK1 is required for its mitochondrial localization. Phosphorylation at Ser-621 in response to growth factor treatment stabilizes the protein, possibly by preventing proteasomal degradation. Phosphorylation at Ser-289, Ser-296, Ser-301, Ser-338 and Ser-621 are somehow linked to the methylation potential of cells. Treatment of cells with HGF in the presence of the methylation inhibitor 5'-methylthioadenosine (MTA) results in increased phosphorylation at Ser-338 and Ser-621 and decreased phosphorylation at Ser-296, Ser-301 and Ser-338. Dephosphorylation at Ser-338 by PPP5C results in a decreased of activity. Post-translationally, methylated in response to EGF treatment. This modification leads to destabilization of the protein, possibly through proteasomal degradation.

It is found in the cytoplasm. It localises to the cell membrane. The protein localises to the mitochondrion. Its subcellular location is the nucleus. It carries out the reaction L-seryl-[protein] + ATP = O-phospho-L-seryl-[protein] + ADP + H(+). The enzyme catalyses L-threonyl-[protein] + ATP = O-phospho-L-threonyl-[protein] + ADP + H(+). Its activity is regulated as follows. Regulation is a highly complex process involving membrane recruitment, protein-protein interactions, dimerization, and phosphorylation/dephosphorylation events. Ras-GTP recruits RAF1 to the membrane, thereby promoting its activation. The inactive conformation of RAF1 is maintained by autoinhibitory interactions occurring between the N-terminal regulatory and the C-terminal catalytic domains and by the binding of a 14-3-3 protein that contacts two phosphorylation sites, Ser-259 and Ser-621. Upon mitogenic stimulation, Ras and PPP2R1A cooperate to release autoinhibition and the subsequent phosphorylation of activating sites: Ser-338, Tyr-341, Thr-491, and Ser-494, yields a fully active kinase. Through a negative feedback mechanism involving MAPK1/ERK2, RAF1 is phosphorylated on Ser-29, Ser-43, Ser-289, Ser-296, Ser-301 and Ser-642 by MAPK1/ERK2, which yields an inactive, desensitized kinase. The signaling-competent conformation of RAF1 is finally re-established by the coordinated action of PIN1, a prolyl isomerase that converts pSer and pThr residues from the cis to the trans conformation, which is preferentially recognized and dephosphorylated by PPP2R1A. Activated by homodimerization and heterodimerization (with BRAF). Also regulated through association with other proteins such as KSR2, CNKSR1/CNK1, PEBP1/RKIP, PHB/prohibitin and SPRY4. PEBP1/RKIP acts by dissociating RAF1 from its substrates MAP2K1/MEK1 and MAP2K2/MEK2. PHB/prohibitin facilitates the displacement of 14-3-3 from RAF1 by activated Ras, thereby promoting cell membrane localization and phosphorylation of RAF1 at the activating Ser-338. SPRY4 inhibits Ras-independent, but not Ras-dependent, activation of RAF1. CNKSR1/CNK1 regulates Src-mediated RAF1 activation. Its function is as follows. Serine/threonine-protein kinase that acts as a regulatory link between the membrane-associated Ras GTPases and the MAPK/ERK cascade, and this critical regulatory link functions as a switch determining cell fate decisions including proliferation, differentiation, apoptosis, survival and oncogenic transformation. RAF1 activation initiates a mitogen-activated protein kinase (MAPK) cascade that comprises a sequential phosphorylation of the dual-specific MAPK kinases (MAP2K1/MEK1 and MAP2K2/MEK2) and the extracellular signal-regulated kinases (MAPK3/ERK1 and MAPK1/ERK2). The phosphorylated form of RAF1 (on residues Ser-338 and Ser-339, by PAK1) phosphorylates BAD/Bcl2-antagonist of cell death at 'Ser-75'. Phosphorylates adenylyl cyclases: ADCY2, ADCY5 and ADCY6, resulting in their activation. Phosphorylates PPP1R12A resulting in inhibition of the phosphatase activity. Can promote NF-kB activation and inhibit signal transducers involved in motility (ROCK2), apoptosis (MAP3K5/ASK1 and STK3/MST2), proliferation and angiogenesis (RB1). Can protect cells from apoptosis also by translocating to the mitochondria where it binds BCL2 and displaces BAD/Bcl2-antagonist of cell death. Regulates Rho signaling and migration, and is required for normal wound healing. Plays a role in the oncogenic transformation of epithelial cells via repression of the TJ protein, occludin (OCLN) by inducing the up-regulation of a transcriptional repressor SNAI2/SLUG, which induces down-regulation of OCLN. Restricts caspase activation in response to selected stimuli, notably Fas stimulation, pathogen-mediated macrophage apoptosis, and erythroid differentiation. Phosphorylates TNNT2/cardiac muscle troponin T. The chain is RAF proto-oncogene serine/threonine-protein kinase (Raf1) from Rattus norvegicus (Rat).